The chain runs to 679 residues: Penicillin-binding protein 1A (679 aa).

Over residues 1–14 (MTERKREHKDRKQN) the composition is skewed to basic residues. The segment at 1–20 (MTERKREHKDRKQNKNSPKN) is disordered. Residues 1–30 (MTERKREHKDRKQNKNSPKNQSKVTKFLKW) are Cytoplasmic-facing. The helical; Signal-anchor for type II membrane protein transmembrane segment at 31-51 (FFIGILLLGITAVTVVGIYVL) threads the bilayer. The Extracellular portion of the chain corresponds to 52–679 (SIIRSSPELD…QYKEVDNLVE (628 aa)). A transglycosylase region spans residues 72–244 (SILYDDQGNF…PTSYDGLSEA (173 aa)). The active-site Proton donor; for transglycosylase activity is glutamate 111. Positions 378-663 (ASATIIDYKT…TSPIFGKIMG (286 aa)) are transpeptidase. The active-site Acyl-ester intermediate; for transpeptidase activity is serine 417.

In the N-terminal section; belongs to the glycosyltransferase 51 family. The protein in the C-terminal section; belongs to the transpeptidase family.

The protein resides in the cell membrane. The catalysed reaction is [GlcNAc-(1-&gt;4)-Mur2Ac(oyl-L-Ala-gamma-D-Glu-L-Lys-D-Ala-D-Ala)](n)-di-trans,octa-cis-undecaprenyl diphosphate + beta-D-GlcNAc-(1-&gt;4)-Mur2Ac(oyl-L-Ala-gamma-D-Glu-L-Lys-D-Ala-D-Ala)-di-trans,octa-cis-undecaprenyl diphosphate = [GlcNAc-(1-&gt;4)-Mur2Ac(oyl-L-Ala-gamma-D-Glu-L-Lys-D-Ala-D-Ala)](n+1)-di-trans,octa-cis-undecaprenyl diphosphate + di-trans,octa-cis-undecaprenyl diphosphate + H(+). It catalyses the reaction Preferential cleavage: (Ac)2-L-Lys-D-Ala-|-D-Ala. Also transpeptidation of peptidyl-alanyl moieties that are N-acyl substituents of D-alanine.. Its pathway is cell wall biogenesis; peptidoglycan biosynthesis. Cell wall formation. Synthesis of cross-linked peptidoglycan from the lipid intermediates. The enzyme has a penicillin-insensitive transglycosylase N-terminal domain (formation of linear glycan strands) and a penicillin-sensitive transpeptidase C-terminal domain (cross-linking of the peptide subunits). The sequence is that of Penicillin-binding protein 1A (pbpA) from Clostridium perfringens (strain 13 / Type A).